Consider the following 556-residue polypeptide: Phenylalanine--tRNA ligase beta subunit (556 aa).

The region spanning 274–349 is the B5 domain; the sequence is HEPEEMEVDL…ITLGLNKIGY (76 aa). The Mg(2+) site is built by aspartate 327, aspartate 333, glutamate 336, and glutamate 337.

Belongs to the phenylalanyl-tRNA synthetase beta subunit family. Type 2 subfamily. In terms of assembly, tetramer of two alpha and two beta subunits. The cofactor is Mg(2+).

It localises to the cytoplasm. It catalyses the reaction tRNA(Phe) + L-phenylalanine + ATP = L-phenylalanyl-tRNA(Phe) + AMP + diphosphate + H(+). This chain is Phenylalanine--tRNA ligase beta subunit, found in Korarchaeum cryptofilum (strain OPF8).